A 214-amino-acid polypeptide reads, in one-letter code: 3-demethoxyubiquinol 3-hydroxylase (214 aa).

Residues Glu-63, Glu-93, His-96, Glu-145, Glu-177, and His-180 each coordinate Fe cation.

It belongs to the COQ7 family. It depends on Fe cation as a cofactor.

It is found in the cell membrane. It catalyses the reaction a 5-methoxy-2-methyl-3-(all-trans-polyprenyl)benzene-1,4-diol + AH2 + O2 = a 3-demethylubiquinol + A + H2O. It participates in cofactor biosynthesis; ubiquinone biosynthesis. In terms of biological role, catalyzes the hydroxylation of 2-nonaprenyl-3-methyl-6-methoxy-1,4-benzoquinol during ubiquinone biosynthesis. The chain is 3-demethoxyubiquinol 3-hydroxylase from Psychrobacter cryohalolentis (strain ATCC BAA-1226 / DSM 17306 / VKM B-2378 / K5).